The sequence spans 96 residues: UPF0235 protein Ent638_3359 (96 aa).

The protein belongs to the UPF0235 family.

This Enterobacter sp. (strain 638) protein is UPF0235 protein Ent638_3359.